Here is a 387-residue protein sequence, read N- to C-terminus: Succinate--CoA ligase [ADP-forming] subunit beta (387 aa).

The ATP-grasp domain occupies Lys-9–Lys-236. ATP-binding positions include Lys-45, Gly-52–Gly-54, Ser-94, and Glu-99. 2 residues coordinate Mg(2+): Asn-191 and Asp-205. Substrate-binding positions include Asn-256 and Gly-318–Thr-320.

This sequence belongs to the succinate/malate CoA ligase beta subunit family. As to quaternary structure, heterotetramer of two alpha and two beta subunits. Mg(2+) serves as cofactor.

The enzyme catalyses succinate + ATP + CoA = succinyl-CoA + ADP + phosphate. The catalysed reaction is GTP + succinate + CoA = succinyl-CoA + GDP + phosphate. Its pathway is carbohydrate metabolism; tricarboxylic acid cycle; succinate from succinyl-CoA (ligase route): step 1/1. Functionally, succinyl-CoA synthetase functions in the citric acid cycle (TCA), coupling the hydrolysis of succinyl-CoA to the synthesis of either ATP or GTP and thus represents the only step of substrate-level phosphorylation in the TCA. The beta subunit provides nucleotide specificity of the enzyme and binds the substrate succinate, while the binding sites for coenzyme A and phosphate are found in the alpha subunit. The polypeptide is Succinate--CoA ligase [ADP-forming] subunit beta (Mycolicibacterium gilvum (strain PYR-GCK) (Mycobacterium gilvum (strain PYR-GCK))).